The chain runs to 227 residues: Cytochrome c oxidase subunit 2 (227 aa).

Residues 1–14 lie on the Mitochondrial intermembrane side of the membrane; it reads MPYPLQLGLQDATS. Residues 15–45 traverse the membrane as a helical segment; it reads PIMEELTHFHDHTLMIVFLISSLVLYIISSM. The Mitochondrial matrix segment spans residues 46–59; it reads LTTKLTHTSTMDAQ. A helical transmembrane segment spans residues 60-87; that stretch reads EVETIWTILPAMILILIALPSLRILYMM. Residues 88–227 lie on the Mitochondrial intermembrane side of the membrane; that stretch reads DEINDPSLTV…YFEDWSASLL (140 aa). Cu cation-binding residues include His-161, Cys-196, Glu-198, Cys-200, His-204, and Met-207. Glu-198 contributes to the Mg(2+) binding site.

The protein belongs to the cytochrome c oxidase subunit 2 family. Component of the cytochrome c oxidase (complex IV, CIV), a multisubunit enzyme composed of 14 subunits. The complex is composed of a catalytic core of 3 subunits MT-CO1, MT-CO2 and MT-CO3, encoded in the mitochondrial DNA, and 11 supernumerary subunits COX4I, COX5A, COX5B, COX6A, COX6B, COX6C, COX7A, COX7B, COX7C, COX8 and NDUFA4, which are encoded in the nuclear genome. The complex exists as a monomer or a dimer and forms supercomplexes (SCs) in the inner mitochondrial membrane with NADH-ubiquinone oxidoreductase (complex I, CI) and ubiquinol-cytochrome c oxidoreductase (cytochrome b-c1 complex, complex III, CIII), resulting in different assemblies (supercomplex SCI(1)III(2)IV(1) and megacomplex MCI(2)III(2)IV(2)). Found in a complex with TMEM177, COA6, COX18, COX20, SCO1 and SCO2. Interacts with TMEM177 in a COX20-dependent manner. Interacts with COX20. Interacts with COX16. It depends on Cu cation as a cofactor.

The protein resides in the mitochondrion inner membrane. It carries out the reaction 4 Fe(II)-[cytochrome c] + O2 + 8 H(+)(in) = 4 Fe(III)-[cytochrome c] + 2 H2O + 4 H(+)(out). Its function is as follows. Component of the cytochrome c oxidase, the last enzyme in the mitochondrial electron transport chain which drives oxidative phosphorylation. The respiratory chain contains 3 multisubunit complexes succinate dehydrogenase (complex II, CII), ubiquinol-cytochrome c oxidoreductase (cytochrome b-c1 complex, complex III, CIII) and cytochrome c oxidase (complex IV, CIV), that cooperate to transfer electrons derived from NADH and succinate to molecular oxygen, creating an electrochemical gradient over the inner membrane that drives transmembrane transport and the ATP synthase. Cytochrome c oxidase is the component of the respiratory chain that catalyzes the reduction of oxygen to water. Electrons originating from reduced cytochrome c in the intermembrane space (IMS) are transferred via the dinuclear copper A center (CU(A)) of subunit 2 and heme A of subunit 1 to the active site in subunit 1, a binuclear center (BNC) formed by heme A3 and copper B (CU(B)). The BNC reduces molecular oxygen to 2 water molecules using 4 electrons from cytochrome c in the IMS and 4 protons from the mitochondrial matrix. This is Cytochrome c oxidase subunit 2 (MT-CO2) from Dugong dugon (Dugong).